The sequence spans 499 residues: Neuronal acetylcholine receptor subunit alpha-3 (499 aa).

The signal sequence occupies residues 1–25 (MGVVLLPPPLSMLMLVLMLLPAASA). Residues 26 to 244 (SEAEHRLFQY…PLFYTINLII (219 aa)) are Extracellular-facing. 2 N-linked (GlcNAc...) asparagine glycosylation sites follow: Asn49 and Asn166. Intrachain disulfides connect Cys153-Cys167 and Cys217-Cys218. The helical transmembrane segment at 245 to 260 (PCLLISFLTVLVFYLP) threads the bilayer. The Cytoplasmic segment spans residues 261-262 (SD). A helical transmembrane segment spans residues 263–279 (CGEKVTLCISVLLSLTV). Glu265 is a Na(+) binding site. Residues 280 to 301 (FLLVITETIPSTSLVIPLIGEY) lie on the Extracellular side of the membrane. A helical transmembrane segment spans residues 302–320 (LLFTMIFVTLSIVITVFVL). The Cytoplasmic portion of the chain corresponds to 321–468 (NVHYRTPTTH…QDDWKYVAMV (148 aa)). Phosphoserine occurs at positions 407 and 410. A helical transmembrane segment spans residues 469–487 (IDRIFLWVFILVCILGTAG). Topologically, residues 488-499 (LFLQPLMARDDT) are extracellular.

Belongs to the ligand-gated ion channel (TC 1.A.9) family. Acetylcholine receptor (TC 1.A.9.1) subfamily. Alpha-3/CHRNA3 sub-subfamily. In terms of assembly, neuronal AChR is composed of two different types of subunits: alpha and beta. CHRNA3/Alpha-3 subunit can be combined to CHRNB2/beta-2 or CHRNB4/beta-4 to give rise to functional receptors. Part of a complex composed of STUB1/CHIP, VCP/p97, CHRNA3, and UBXN2A that modulates the ubiquitination and endoplasmic reticulum-associated degradation (ERAD) of CHRNA3. Within the complex UBXN2A acts as a scaffold protein required for the interaction of CHRNA3 with VCP/p97, this interaction also inhibits CHRNA3 ubiquitination by STUB1/CHIP and subsequently ERAD. Interacts with UBXN2A (via SEP domain), the interaction is required for the interaction of CHRNA3 in the STUB1:VCP:UBXN2A complex. Interacts with RIC3; which is required for proper folding and assembly. Post-translationally, ubiquitinated; by STUB1/CHIP and thereafter degraded by the 26S proteosome complex. Expressed in neurons. Expressed in umbrella cells of urothelium (at protein level).

Its subcellular location is the synaptic cell membrane. It localises to the cell membrane. The protein localises to the endoplasmic reticulum. The protein resides in the golgi apparatus. The enzyme catalyses Ca(2+)(in) = Ca(2+)(out). The catalysed reaction is K(+)(in) = K(+)(out). It carries out the reaction Na(+)(in) = Na(+)(out). Its activity is regulated as follows. Activated by a myriad of ligands such as acetylcholine, cytisine, nicotine, choline and epibatidine. The heteropentamer CHRNA3:CHRNB2 activity is blocked by alpha-conotoxins ImI, ImII, PnIA, GID and MII. The heteropentamer CHRNA3:CHRNB4 activity is blocked by the alpha-conotoxin ImI and AuIB. Functionally, component of neuronal acetylcholine receptors (nAChRs) that function as pentameric, ligand-gated cation channels with high calcium permeability among other activities. nAChRs are excitatory neurotrasnmitter receptors formed by a collection of nAChR subunits known to mediate synaptic transmission in the nervous system and the neuromuscular junction. Each nAchR subunit confers differential attributes to channel properties, including activation, deactivation and desensitization kinetics, pH sensitivity, cation permeability, and binding to allosteric modulators. CHRNA3 forms heteropentameric neuronal acetylcholine receptors with CHRNB2 and CHRNB4. CHRNA3:CHRNB4 being predominant in neurons of the autonomic ganglia, it is known as ganglionic nicotinic receptor. CHRNA3:CHRNB4 also plays an important role in the habenulo-interpeduncular tract, modulating the mesolimbic dopamine system and affecting reward circuits and addiction. Hypothalamic CHRNA3:CHRNB4 nAChR activation by nicotine leads to activation of POMC neurons and a decrease in food intake. Also expressed in the urothelium where it modulates reflex bladder activity by increasing intracellular calcium through extracellular influx and basal ATP release. This Rattus norvegicus (Rat) protein is Neuronal acetylcholine receptor subunit alpha-3 (Chrna3).